A 520-amino-acid chain; its full sequence is GMP synthase [glutamine-hydrolyzing] (520 aa).

The Glutamine amidotransferase type-1 domain maps to 9-202 (TVLIVDFGSQ…VHNIAGIEGD (194 aa)). The Nucleophile role is filled by cysteine 86. Active-site residues include histidine 176 and glutamate 178. The 193-residue stretch at 203 to 395 (WTMRAYREHA…LGLPESFIGR (193 aa)) folds into the GMPS ATP-PPase domain. Residue 230–236 (SGGVDSS) coordinates ATP.

Homodimer.

The enzyme catalyses XMP + L-glutamine + ATP + H2O = GMP + L-glutamate + AMP + diphosphate + 2 H(+). It participates in purine metabolism; GMP biosynthesis; GMP from XMP (L-Gln route): step 1/1. Its function is as follows. Catalyzes the synthesis of GMP from XMP. The protein is GMP synthase [glutamine-hydrolyzing] of Mesorhizobium japonicum (strain LMG 29417 / CECT 9101 / MAFF 303099) (Mesorhizobium loti (strain MAFF 303099)).